The following is a 280-amino-acid chain: MDRYYYEYTVDIDAFKDEIESFLMDRFYNGIEESDGKLILRSEKSLDDIMDELRTYVDSLIKLFDTEIHLKITKEKKENIDWIEKYKKSITPVEVGEFYIHPSWYEPKEGKTNIKIDPALAFGSGHHETTRGCLNAIQKYVQPGMELLDVGCGSGILSIAAAKKGAVVDICDTDALALEESQKNFSLNGVEFREGWVGSAANAKKKYDIVIANIVADVLIMIAKDLQETTKEGGILILSGIIEKYRNKVKNRFDFSILEELQEGEWITMILRNDRGTDGK.

Thr-130, Gly-151, Asp-172, and Asn-213 together coordinate S-adenosyl-L-methionine.

This sequence belongs to the methyltransferase superfamily. PrmA family.

Its subcellular location is the cytoplasm. The enzyme catalyses L-lysyl-[protein] + 3 S-adenosyl-L-methionine = N(6),N(6),N(6)-trimethyl-L-lysyl-[protein] + 3 S-adenosyl-L-homocysteine + 3 H(+). Functionally, methylates ribosomal protein L11. This chain is Ribosomal protein L11 methyltransferase, found in Nitratiruptor sp. (strain SB155-2).